A 209-amino-acid polypeptide reads, in one-letter code: Ribonuclease HII (209 aa).

One can recognise an RNase H type-2 domain in the interval 18 to 209; that stretch reads GLVAGVDEVG…FKPVKALLER (192 aa). Residues aspartate 24, glutamate 25, and aspartate 116 each contribute to the a divalent metal cation site.

Belongs to the RNase HII family. Mn(2+) is required as a cofactor. The cofactor is Mg(2+).

The protein resides in the cytoplasm. It carries out the reaction Endonucleolytic cleavage to 5'-phosphomonoester.. Functionally, endonuclease that specifically degrades the RNA of RNA-DNA hybrids. In Shewanella sp. (strain ANA-3), this protein is Ribonuclease HII.